A 537-amino-acid chain; its full sequence is ATP synthase subunit alpha (537 aa).

171 to 178 is a binding site for ATP; it reads GDRQTGKT.

The protein belongs to the ATPase alpha/beta chains family. In terms of assembly, F-type ATPases have 2 components, CF(1) - the catalytic core - and CF(0) - the membrane proton channel. CF(1) has five subunits: alpha(3), beta(3), gamma(1), delta(1), epsilon(1). CF(0) has four main subunits: a, b, b' and c.

The protein localises to the cell inner membrane. The enzyme catalyses ATP + H2O + 4 H(+)(in) = ADP + phosphate + 5 H(+)(out). Produces ATP from ADP in the presence of a proton gradient across the membrane. The alpha chain is a regulatory subunit. This Chloroherpeton thalassium (strain ATCC 35110 / GB-78) protein is ATP synthase subunit alpha.